A 172-amino-acid chain; its full sequence is MNQDHPEFDSEDLAQNPPETDPLKAEIESLRSEIALVKADALRERADLENQRKRIARDVENARKFANEKLLGELLPVFDSLDAGLTAAGTQPSPLRDGLDMTYKQLLKVAADNGLTLLDPVGQPFNPDQHQAISQGEAEGIAPGHVVQVFQKGYLLNDRLLRPALVVVAKQD.

The interval Met1–Lys24 is disordered.

This sequence belongs to the GrpE family. In terms of assembly, homodimer.

The protein localises to the cytoplasm. In terms of biological role, participates actively in the response to hyperosmotic and heat shock by preventing the aggregation of stress-denatured proteins, in association with DnaK and GrpE. It is the nucleotide exchange factor for DnaK and may function as a thermosensor. Unfolded proteins bind initially to DnaJ; upon interaction with the DnaJ-bound protein, DnaK hydrolyzes its bound ATP, resulting in the formation of a stable complex. GrpE releases ADP from DnaK; ATP binding to DnaK triggers the release of the substrate protein, thus completing the reaction cycle. Several rounds of ATP-dependent interactions between DnaJ, DnaK and GrpE are required for fully efficient folding. The chain is Protein GrpE from Xanthomonas oryzae pv. oryzae (strain PXO99A).